A 179-amino-acid chain; its full sequence is uncharacterized protein (179 aa).

Disordered regions lie at residues 26 to 103 and 136 to 179; these read LSAV…SYED and KHKA…SWFN. Residues 34–61 show a composition bias toward basic and acidic residues; the sequence is QQGKNEEQRQHDEWVAERNREIQQEKQR. Positions 63-79 are enriched in low complexity; sequence ANAQAAANKRAATAAAN. Composition is skewed to basic and acidic residues over residues 82–103 and 158–179; these read ARQDKLDAEASADKKRDQSYED and GGRDLMKSVGKAEENKSDSWFN.

This is an uncharacterized protein from Escherichia coli (strain K12).